A 216-amino-acid chain; its full sequence is Large ribosomal subunit protein uL24m (216 aa).

The N-terminal 9 residues, 1-9, are a transit peptide targeting the mitochondrion; sequence MRLSALLAL. Serine 24 is subject to Phosphoserine. The KOW domain occupies 56-89; it reads LFCGDTVEILEGKDAGKQGKVVQVIRQRNWVVVG.

Belongs to the universal ribosomal protein uL24 family. Component of the mitochondrial large ribosomal subunit (mt-LSU). Mature mammalian 55S mitochondrial ribosomes consist of a small (28S) and a large (39S) subunit. The 28S small subunit contains a 12S ribosomal RNA (12S mt-rRNA) and 30 different proteins. The 39S large subunit contains a 16S rRNA (16S mt-rRNA), a copy of mitochondrial valine transfer RNA (mt-tRNA(Val)), which plays an integral structural role, and 52 different proteins.

Its subcellular location is the mitochondrion. The sequence is that of Large ribosomal subunit protein uL24m (MRPL24) from Homo sapiens (Human).